Here is a 312-residue protein sequence, read N- to C-terminus: Translation initiation factor IF3-2, chloroplastic (312 aa).

Residues 1–55 (MAGITSSTVGFNAVFTGITKTVSSHSLFSVDSKLCSLRLSKTELSFTNLTPSPRR) constitute a chloroplast transit peptide. A compositionally biased stretch (basic and acidic residues) spans 253–263 (EMIRKPQEPPT). Residues 253 to 312 (EMIRKPQEPPTRKKKKTAENEASASAAEITAEPEPEPEPEPEPEPEPEPEPEPEPLQIDS) form a disordered region. A compositionally biased stretch (low complexity) spans 272 to 282 (NEASASAAEIT). A compositionally biased stretch (acidic residues) spans 283-305 (AEPEPEPEPEPEPEPEPEPEPEP).

Belongs to the IF-3 family. In terms of assembly, monomer. Highly expressed in young, newly emerged leaves.

The protein localises to the plastid. The protein resides in the chloroplast. In terms of biological role, chloroplast translation initiation factor that is essential for the coordination of leaf and chloroplast development. IF-3 binds to the 30S ribosomal subunit and shifts the equilibrium between 70S ribosomes and their 50S and 30S subunits in favor of the free subunits, thus enhancing the availability of 30S subunits on which protein synthesis initiation begins. This chain is Translation initiation factor IF3-2, chloroplastic, found in Arabidopsis thaliana (Mouse-ear cress).